Consider the following 270-residue polypeptide: Cytochrome c oxidase subunit 3 (270 aa).

7 helical membrane passes run 21–41 (PWPF…VLYF), 46–66 (GSLV…FVWW), 90–110 (GIML…WAFF), 131–151 (FFSP…SGCA), 167–187 (AIFS…FQIY), 205–225 (FFMI…FLFV), and 248–268 (WYWH…YWWG).

This sequence belongs to the cytochrome c oxidase subunit 3 family. In terms of assembly, component of the cytochrome c oxidase (complex IV, CIV), a multisubunit enzyme composed of a catalytic core of 3 subunits and several supernumerary subunits. The complex exists as a monomer or a dimer and forms supercomplexes (SCs) in the inner mitochondrial membrane with ubiquinol-cytochrome c oxidoreductase (cytochrome b-c1 complex, complex III, CIII).

Its subcellular location is the mitochondrion inner membrane. It carries out the reaction 4 Fe(II)-[cytochrome c] + O2 + 8 H(+)(in) = 4 Fe(III)-[cytochrome c] + 2 H2O + 4 H(+)(out). Component of the cytochrome c oxidase, the last enzyme in the mitochondrial electron transport chain which drives oxidative phosphorylation. The respiratory chain contains 3 multisubunit complexes succinate dehydrogenase (complex II, CII), ubiquinol-cytochrome c oxidoreductase (cytochrome b-c1 complex, complex III, CIII) and cytochrome c oxidase (complex IV, CIV), that cooperate to transfer electrons derived from NADH and succinate to molecular oxygen, creating an electrochemical gradient over the inner membrane that drives transmembrane transport and the ATP synthase. Cytochrome c oxidase is the component of the respiratory chain that catalyzes the reduction of oxygen to water. Electrons originating from reduced cytochrome c in the intermembrane space (IMS) are transferred via the dinuclear copper A center (CU(A)) of subunit 2 and heme A of subunit 1 to the active site in subunit 1, a binuclear center (BNC) formed by heme A3 and copper B (CU(B)). The BNC reduces molecular oxygen to 2 water molecules using 4 electrons from cytochrome c in the IMS and 4 protons from the mitochondrial matrix. The protein is Cytochrome c oxidase subunit 3 (COX3) of Cyanidium caldarium (Red alga).